The sequence spans 1047 residues: Jouberin (1047 aa).

Basic and acidic residues-rich tracts occupy residues 1–17 (MEQE…EKVR) and 77–86 (LLHDDKLGSE). Disordered regions lie at residues 1–44 (MEQE…LTEA) and 67–185 (EQLT…SPVH). Residues 1–285 (MEQETPEKVD…IFNENFPYLL (285 aa)) are interaction with HAP1. Basic residues predominate over residues 87 to 96 (KRKKKKKKKV). Basic and acidic residues predominate over residues 116 to 132 (GEQKKEGAPEGSHHREG). Residues 150-160 (PKPKKMKKKPK) show a composition bias toward basic residues. A compositionally biased stretch (basic and acidic residues) spans 173 to 185 (GVHEITGRDSPVH). 7 WD repeats span residues 458–500 (AGER…FMRE), 503–542 (GHLN…TSTF), 546–586 (PHPS…DAAI), 593–632 (VHKS…TDVQ), 649–688 (FRGV…ARKF), 692–731 (ANYR…QVAM), and 736–777 (PFKS…AQQE). S854 carries the phosphoserine modification. Residues 903–963 (DPPPMVVALY…PANHVASETL (61 aa)) enclose the SH3 domain. Basic and acidic residues-rich tracts occupy residues 964–1003 (YRDS…RFLD) and 1012–1040 (GHSE…EPTV). The tract at residues 964–1047 (YRDSPPKVKE…PTVRKVTLIE (84 aa)) is disordered. A Phosphoserine modification is found at S975.

As to quaternary structure, self-associates. Part of the tectonic-like complex (also named B9 complex). Interacts with MKS1. Interacts with NPHP1; probably as heterodimers and/or AHI1(2):NPHP1(2) heterotetramers. Interacts (via SH3 domain) with the dynamin GTPase DNM2. Interacts with HAP1; probably as AHI1(2):HAP1(2) heterotetramers. Interacts with RAB8A. Interacts with CEND1. Interacts with SPATA7.

Its subcellular location is the cytoplasm. It localises to the cytoskeleton. The protein resides in the cilium basal body. It is found in the microtubule organizing center. The protein localises to the centrosome. Its subcellular location is the centriole. It localises to the cell junction. The protein resides in the adherens junction. Involved in vesicle trafficking and required for ciliogenesis, formation of primary non-motile cilium, and recruitment of RAB8A to the basal body of primary cilium. Component of the tectonic-like complex, a complex localized at the transition zone of primary cilia and acting as a barrier that prevents diffusion of transmembrane proteins between the cilia and plasma membranes. Involved in neuronal differentiation. As a positive modulator of classical Wnt signaling, may play a crucial role in ciliary signaling during cerebellum embryonic development. The protein is Jouberin (Ahi1) of Rattus norvegicus (Rat).